The chain runs to 391 residues: Pyridinium-3,5-bisthiocarboxylic acid mononucleotide nickel insertion protein (391 aa).

Belongs to the LarC family.

The enzyme catalyses Ni(II)-pyridinium-3,5-bisthiocarboxylate mononucleotide = pyridinium-3,5-bisthiocarboxylate mononucleotide + Ni(2+). In terms of biological role, involved in the biosynthesis of a nickel-pincer cofactor ((SCS)Ni(II) pincer complex). Binds Ni(2+), and functions in nickel delivery to pyridinium-3,5-bisthiocarboxylic acid mononucleotide (P2TMN), to form the mature cofactor. Is thus probably required for the activation of nickel-pincer cofactor-dependent enzymes. This chain is Pyridinium-3,5-bisthiocarboxylic acid mononucleotide nickel insertion protein, found in Staphylococcus saprophyticus subsp. saprophyticus (strain ATCC 15305 / DSM 20229 / NCIMB 8711 / NCTC 7292 / S-41).